The chain runs to 190 residues: Threonylcarbamoyl-AMP synthase (190 aa).

The region spanning 7–190 (LGSIAQAVDV…ALTGERFRQG (184 aa)) is the YrdC-like domain.

The protein belongs to the SUA5 family. TsaC subfamily.

It localises to the cytoplasm. The enzyme catalyses L-threonine + hydrogencarbonate + ATP = L-threonylcarbamoyladenylate + diphosphate + H2O. Required for the formation of a threonylcarbamoyl group on adenosine at position 37 (t(6)A37) in tRNAs that read codons beginning with adenine. Catalyzes the conversion of L-threonine, HCO(3)(-)/CO(2) and ATP to give threonylcarbamoyl-AMP (TC-AMP) as the acyladenylate intermediate, with the release of diphosphate. This chain is Threonylcarbamoyl-AMP synthase, found in Enterobacter sp. (strain 638).